We begin with the raw amino-acid sequence, 168 residues long: Photosystem I assembly protein Ycf3 (168 aa).

3 TPR repeats span residues 35–68 (AFTY…EIDP), 72–105 (SYIL…NPFL), and 120–153 (GEQA…TPGN).

Belongs to the Ycf3 family.

It is found in the plastid. The protein resides in the chloroplast thylakoid membrane. Its function is as follows. Essential for the assembly of the photosystem I (PSI) complex. May act as a chaperone-like factor to guide the assembly of the PSI subunits. The sequence is that of Photosystem I assembly protein Ycf3 from Lemna minor (Common duckweed).